We begin with the raw amino-acid sequence, 235 residues long: Putative 4'-phosphopantetheinyl transferase HI_0152 (235 aa).

Mg(2+)-binding residues include aspartate 112, glutamate 114, and glutamate 155.

It belongs to the P-Pant transferase superfamily. Gsp/Sfp/HetI/AcpT family. Mg(2+) is required as a cofactor.

Functionally, may transfer the 4'-phosphopantetheine moiety from coenzyme A (CoA) to a serine residue of a carrier protein domain. The polypeptide is Putative 4'-phosphopantetheinyl transferase HI_0152 (Haemophilus influenzae (strain ATCC 51907 / DSM 11121 / KW20 / Rd)).